A 158-amino-acid polypeptide reads, in one-letter code: Coenzyme F420 hydrogenase subunit delta (158 aa).

The protein belongs to the peptidase A31 family.

This chain is Coenzyme F420 hydrogenase subunit delta (frhD), found in Methanothermobacter thermautotrophicus (strain ATCC 29096 / DSM 1053 / JCM 10044 / NBRC 100330 / Delta H) (Methanobacterium thermoautotrophicum).